Consider the following 83-residue polypeptide: Cytochrome c5 (83 aa).

Positions 15, 18, 19, and 59 each coordinate heme c. A disulfide bridge links cysteine 65 with cysteine 68.

The protein belongs to the cytochrome c family. Homodimer. Post-translationally, binds 1 heme c group covalently per subunit.

Its function is as follows. It is unreactive with cytochrome c reductase or oxidase. In Azotobacter vinelandii, this protein is Cytochrome c5.